The chain runs to 802 residues: Phenylalanine--tRNA ligase beta subunit (802 aa).

The 111-residue stretch at 38–148 (SKNFERVIVG…SEVPVGTDIS (111 aa)) folds into the tRNA-binding domain. In terms of domain architecture, B5 spans 403–478 (VIQKKIFVLK…RVFGYHNIPA (76 aa)). Aspartate 456, aspartate 462, and aspartate 466 together coordinate Mg(2+). One can recognise an FDX-ACB domain in the interval 703–796 (SLYPRCSRDI…LQEKFNAILR (94 aa)).

The protein belongs to the phenylalanyl-tRNA synthetase beta subunit family. Type 1 subfamily. As to quaternary structure, tetramer of two alpha and two beta subunits. The cofactor is Mg(2+).

The protein localises to the cytoplasm. The enzyme catalyses tRNA(Phe) + L-phenylalanine + ATP = L-phenylalanyl-tRNA(Phe) + AMP + diphosphate + H(+). This chain is Phenylalanine--tRNA ligase beta subunit, found in Buchnera aphidicola subsp. Baizongia pistaciae (strain Bp).